A 366-amino-acid polypeptide reads, in one-letter code: Growth hormone secretagogue receptor type 1 (366 aa).

The Extracellular portion of the chain corresponds to 1–40 (MWNATPSEEPGSNLTRAELGWDAPPGNDSLADELLQLFPA). 2 N-linked (GlcNAc...) asparagine glycosylation sites follow: asparagine 13 and asparagine 27. The chain crosses the membrane as a helical span at residues 41 to 66 (PLLAGVTATCVALFVVGIAGNLLTML). At 67-72 (VVSRFR) the chain is on the cytoplasmic side. The chain crosses the membrane as a helical span at residues 73-96 (ELRTTTNLYLSSMAFSDLLIFLCM). The Extracellular portion of the chain corresponds to 97 to 117 (PLDLVRLWQYRPWNFGDLLCK). A disulfide bridge links cysteine 116 with cysteine 198. The chain crosses the membrane as a helical span at residues 118–139 (LFQFVSESCTYATVLTITALSV). The Cytoplasmic segment spans residues 140–162 (ERYFAICFPLRAKVVVTKGRVKL). A helical transmembrane segment spans residues 163-183 (VILVIWALAFCSAGPIFVLVG). At 184–211 (VEHENGTDPQDTNECRATEFAVRSGLLT) the chain is on the extracellular side. N-linked (GlcNAc...) asparagine glycosylation is present at asparagine 188. The chain crosses the membrane as a helical span at residues 212 to 235 (IMVWVSSVFFFLPVFCLTVLYSLI). At 236–263 (GRKLWRRKRGDGAVGSSLRDQNHRQTVK) the chain is on the cytoplasmic side. The helical transmembrane segment at 264-285 (MLAVVVFAFILCWLPFHVGRYL) threads the bilayer. Residues 286–302 (FSKSFEPGSLEIAQISQ) lie on the Extracellular side of the membrane. A helical membrane pass occupies residues 303–326 (YCNLVSFVLFYLSAAINPILYNIM). The Cytoplasmic portion of the chain corresponds to 327 to 366 (SKKYRVAVFKLLGFEPFSQRKLSTLKDESSRAWTKSSINT).

It belongs to the G-protein coupled receptor 1 family.

It localises to the cell membrane. Its function is as follows. Receptor for ghrelin, coupled to G-alpha-11 proteins. Stimulates growth hormone secretion. Also binds other growth hormone releasing peptides (GHRP) (e.g. Met-enkephalin and GHRP-6) as well as non-peptide, low molecular weight secretagogues (e.g. L-692,429, MK-0677, adenosine). This chain is Growth hormone secretagogue receptor type 1 (GHSR), found in Oryctolagus cuniculus (Rabbit).